We begin with the raw amino-acid sequence, 176 residues long: MFHATTIVAVKKGEQVAMAGDGQVTMGQATVMKHKARKVRRLFHGKVLAGFAGSVADAFTLFEKFENKLEEYQGNLQRAAVELAKDWRMDKALRNLEALLIVADKQSMLLISGSGEVIEPDDGIAAIGSGGNYALAAARALVKNTDLQPAQLVQEAMEVASSICVYTNDQIIVEEL.

Thr-5 is an active-site residue. Ser-161, Cys-164, and Thr-167 together coordinate Na(+).

Belongs to the peptidase T1B family. HslV subfamily. In terms of assembly, a double ring-shaped homohexamer of HslV is capped on each side by a ring-shaped HslU homohexamer. The assembly of the HslU/HslV complex is dependent on binding of ATP.

Its subcellular location is the cytoplasm. The enzyme catalyses ATP-dependent cleavage of peptide bonds with broad specificity.. Its activity is regulated as follows. Allosterically activated by HslU binding. Functionally, protease subunit of a proteasome-like degradation complex believed to be a general protein degrading machinery. In Desulfitobacterium hafniense (strain Y51), this protein is ATP-dependent protease subunit HslV.